Here is a 503-residue protein sequence, read N- to C-terminus: Lanosterol 14-alpha demethylase (503 aa).

Residues 24–44 form a helical membrane-spanning segment; it reads GNLLSTLLIACAFTLSLVYLF. Cys449 is a heme binding site.

This sequence belongs to the cytochrome P450 family. The cofactor is heme. Post-translationally, ubiquitinated by MARCHF6, leading to proteasomal degradation.

The protein resides in the endoplasmic reticulum membrane. Its subcellular location is the microsome membrane. It catalyses the reaction a 14alpha-methyl steroid + 3 reduced [NADPH--hemoprotein reductase] + 3 O2 = a Delta(14) steroid + formate + 3 oxidized [NADPH--hemoprotein reductase] + 4 H2O + 4 H(+). It carries out the reaction lanosterol + 3 reduced [NADPH--hemoprotein reductase] + 3 O2 = 4,4-dimethyl-5alpha-cholesta-8,14,24-trien-3beta-ol + formate + 3 oxidized [NADPH--hemoprotein reductase] + 4 H2O + 4 H(+). The catalysed reaction is 24,25-dihydrolanosterol + 3 reduced [NADPH--hemoprotein reductase] + 3 O2 = 4,4-dimethyl-8,14-cholestadien-3beta-ol + formate + 3 oxidized [NADPH--hemoprotein reductase] + 4 H2O + 4 H(+). The enzyme catalyses a 14alpha-methyl steroid + reduced [NADPH--hemoprotein reductase] + O2 = a 14alpha-hydroxymethyl steroid + oxidized [NADPH--hemoprotein reductase] + H2O + H(+). It catalyses the reaction a 14alpha-hydroxymethyl steroid + reduced [NADPH--hemoprotein reductase] + O2 = a 14alpha-formyl steroid + oxidized [NADPH--hemoprotein reductase] + 2 H2O + H(+). It carries out the reaction a 14alpha-formyl steroid + reduced [NADPH--hemoprotein reductase] + O2 = a Delta(14) steroid + formate + oxidized [NADPH--hemoprotein reductase] + H2O + 2 H(+). The catalysed reaction is lanosterol + reduced [NADPH--hemoprotein reductase] + O2 = 32-hydroxylanosterol + oxidized [NADPH--hemoprotein reductase] + H2O + H(+). The enzyme catalyses 32-hydroxylanosterol + reduced [NADPH--hemoprotein reductase] + O2 = 32-oxolanosterol + oxidized [NADPH--hemoprotein reductase] + 2 H2O + H(+). It catalyses the reaction 32-oxolanosterol + reduced [NADPH--hemoprotein reductase] + O2 = 4,4-dimethyl-5alpha-cholesta-8,14,24-trien-3beta-ol + formate + oxidized [NADPH--hemoprotein reductase] + H2O + 2 H(+). It carries out the reaction 24,25-dihydrolanosterol + reduced [NADPH--hemoprotein reductase] + O2 = 32-hydroxy-24,25-dihydrolanosterol + oxidized [NADPH--hemoprotein reductase] + H2O + H(+). The catalysed reaction is 32-hydroxy-24,25-dihydrolanosterol + reduced [NADPH--hemoprotein reductase] + O2 = 32-oxo-24,25-dihydrolanosterol + oxidized [NADPH--hemoprotein reductase] + 2 H2O + H(+). The enzyme catalyses 32-oxo-24,25-dihydrolanosterol + reduced [NADPH--hemoprotein reductase] + O2 = 4,4-dimethyl-8,14-cholestadien-3beta-ol + formate + oxidized [NADPH--hemoprotein reductase] + H2O + 2 H(+). The protein operates within steroid biosynthesis; zymosterol biosynthesis; zymosterol from lanosterol: step 1/6. With respect to regulation, inhibited by azalanstat. Inhibited by azole antifungal agents ketoconazole, itraconazole and fluconazole. Sterol 14alpha-demethylase that plays a critical role in the cholesterol biosynthesis pathway, being cholesterol the major sterol component in mammalian membranes as well as a precursor for bile acid and steroid hormone synthesis. Cytochrome P450 monooxygenase that catalyzes the three-step oxidative removal of the 14alpha-methyl group (C-32) of sterols such as lanosterol (lanosta-8,24-dien-3beta-ol) and 24,25-dihydrolanosterol (DHL) in the form of formate, and converts the sterols to 4,4-dimethyl-5alpha-cholesta-8,14,24-trien-3beta-ol and 4,4-dimethyl-8,14-cholestadien-3beta-ol, respectively, which are intermediates of cholesterol biosynthesis. Can also demethylate substrates not intrinsic to mammals, such as eburicol (24-methylene-24,25-dihydrolanosterol), but at a lower rate than DHL. The polypeptide is Lanosterol 14-alpha demethylase (Rattus norvegicus (Rat)).